The sequence spans 484 residues: tRNA sulfurtransferase (484 aa).

The region spanning 62–166 (GPVIDELVRI…DDSYHIAHRR (105 aa)) is the THUMP domain. ATP contacts are provided by residues 184–185 (LI), Lys266, Gly288, and Gln297. The cysteines at positions 345 and 456 are disulfide-linked. Residues 404–482 (PSVDDVIIDV…GHGNIKVYAP (79 aa)) form the Rhodanese domain. Cys456 serves as the catalytic Cysteine persulfide intermediate.

Belongs to the ThiI family.

It is found in the cytoplasm. The catalysed reaction is [ThiI sulfur-carrier protein]-S-sulfanyl-L-cysteine + a uridine in tRNA + 2 reduced [2Fe-2S]-[ferredoxin] + ATP + H(+) = [ThiI sulfur-carrier protein]-L-cysteine + a 4-thiouridine in tRNA + 2 oxidized [2Fe-2S]-[ferredoxin] + AMP + diphosphate. The enzyme catalyses [ThiS sulfur-carrier protein]-C-terminal Gly-Gly-AMP + S-sulfanyl-L-cysteinyl-[cysteine desulfurase] + AH2 = [ThiS sulfur-carrier protein]-C-terminal-Gly-aminoethanethioate + L-cysteinyl-[cysteine desulfurase] + A + AMP + 2 H(+). The protein operates within cofactor biosynthesis; thiamine diphosphate biosynthesis. In terms of biological role, catalyzes the ATP-dependent transfer of a sulfur to tRNA to produce 4-thiouridine in position 8 of tRNAs, which functions as a near-UV photosensor. Also catalyzes the transfer of sulfur to the sulfur carrier protein ThiS, forming ThiS-thiocarboxylate. This is a step in the synthesis of thiazole, in the thiamine biosynthesis pathway. The sulfur is donated as persulfide by IscS. This is tRNA sulfurtransferase from Marinobacter nauticus (strain ATCC 700491 / DSM 11845 / VT8) (Marinobacter aquaeolei).